The following is a 165-amino-acid chain: Lipoprotein signal peptidase (165 aa).

4 helical membrane passes run 11-31, 41-61, 64-84, and 92-112; these read YWVL…AVLS, VIPS…FSFL, QGGW…AYLV, and FATL…GNVI. Residues D122 and D140 contribute to the active site. Residues 132 to 152 form a helical membrane-spanning segment; sequence FYPAFNIADSFICVGAVLAVL.

It belongs to the peptidase A8 family.

The protein localises to the cell inner membrane. The catalysed reaction is Release of signal peptides from bacterial membrane prolipoproteins. Hydrolyzes -Xaa-Yaa-Zaa-|-(S,diacylglyceryl)Cys-, in which Xaa is hydrophobic (preferably Leu), and Yaa (Ala or Ser) and Zaa (Gly or Ala) have small, neutral side chains.. The protein operates within protein modification; lipoprotein biosynthesis (signal peptide cleavage). Functionally, this protein specifically catalyzes the removal of signal peptides from prolipoproteins. This is Lipoprotein signal peptidase from Neisseria meningitidis serogroup A / serotype 4A (strain DSM 15465 / Z2491).